Reading from the N-terminus, the 294-residue chain is 4-hydroxy-tetrahydrodipicolinate synthase (294 aa).

Residue T47 coordinates pyruvate. Catalysis depends on Y135, which acts as the Proton donor/acceptor. The Schiff-base intermediate with substrate role is filled by K163. I205 serves as a coordination point for pyruvate.

The protein belongs to the DapA family. In terms of assembly, homotetramer; dimer of dimers.

It is found in the cytoplasm. It carries out the reaction L-aspartate 4-semialdehyde + pyruvate = (2S,4S)-4-hydroxy-2,3,4,5-tetrahydrodipicolinate + H2O + H(+). Its pathway is amino-acid biosynthesis; L-lysine biosynthesis via DAP pathway; (S)-tetrahydrodipicolinate from L-aspartate: step 3/4. Functionally, catalyzes the condensation of (S)-aspartate-beta-semialdehyde [(S)-ASA] and pyruvate to 4-hydroxy-tetrahydrodipicolinate (HTPA). In Rickettsia typhi (strain ATCC VR-144 / Wilmington), this protein is 4-hydroxy-tetrahydrodipicolinate synthase.